The chain runs to 357 residues: Serine proteinase inhibitor 1 (357 aa).

Belongs to the serpin family. Poxviruses subfamily.

The protein localises to the host cytoplasm. Plays a role in mediating viral host range. May act to inhibit a caspase independent form of apoptosis to allow efficient virus replication in infected cells. This chain is Serine proteinase inhibitor 1 (OPG208), found in Monkeypox virus.